The primary structure comprises 364 residues: sn-glycerol-3-phosphate import ATP-binding protein UgpC (364 aa).

Residues 4–235 (VVLRNVRKTY…PATTFVASFI (232 aa)) enclose the ABC transporter domain. ATP is bound at residue 37–44 (GPSGCGKS).

This sequence belongs to the ABC transporter superfamily. sn-glycerol-3-phosphate importer (TC 3.A.1.1.3) family. As to quaternary structure, the complex is composed of two ATP-binding proteins (UgpC), two transmembrane proteins (UgpA and UgpE) and a solute-binding protein (UgpB).

Its subcellular location is the cell inner membrane. It carries out the reaction sn-glycerol 3-phosphate(out) + ATP + H2O = sn-glycerol 3-phosphate(in) + ADP + phosphate + H(+). Part of the ABC transporter complex UgpBAEC involved in sn-glycerol-3-phosphate (G3P) import. Responsible for energy coupling to the transport system. The sequence is that of sn-glycerol-3-phosphate import ATP-binding protein UgpC from Rhodopseudomonas palustris (strain HaA2).